Consider the following 587-residue polypeptide: Aspartate--tRNA ligase (587 aa).

Glu-174 is a binding site for L-aspartate. The aspartate stretch occupies residues 198-201 (QITK). L-aspartate is bound at residue Arg-220. Residues 220–222 (RDE) and Gln-229 each bind ATP. An L-aspartate-binding site is contributed by His-443. Glu-477 contacts ATP. Arg-484 serves as a coordination point for L-aspartate. 529–532 (GLDR) lines the ATP pocket.

This sequence belongs to the class-II aminoacyl-tRNA synthetase family. Type 1 subfamily. As to quaternary structure, homodimer.

It localises to the cytoplasm. The enzyme catalyses tRNA(Asp) + L-aspartate + ATP = L-aspartyl-tRNA(Asp) + AMP + diphosphate. Catalyzes the attachment of L-aspartate to tRNA(Asp) in a two-step reaction: L-aspartate is first activated by ATP to form Asp-AMP and then transferred to the acceptor end of tRNA(Asp). In Streptococcus pneumoniae (strain ATCC 700669 / Spain 23F-1), this protein is Aspartate--tRNA ligase.